The sequence spans 199 residues: Imidazoleglycerol-phosphate dehydratase (199 aa).

The protein belongs to the imidazoleglycerol-phosphate dehydratase family.

It is found in the cytoplasm. It catalyses the reaction D-erythro-1-(imidazol-4-yl)glycerol 3-phosphate = 3-(imidazol-4-yl)-2-oxopropyl phosphate + H2O. It participates in amino-acid biosynthesis; L-histidine biosynthesis; L-histidine from 5-phospho-alpha-D-ribose 1-diphosphate: step 6/9. This is Imidazoleglycerol-phosphate dehydratase from Desulfotalea psychrophila (strain LSv54 / DSM 12343).